The primary structure comprises 475 residues: uncharacterized protein (475 aa).

A helical membrane pass occupies residues 19–39 (IKVGVFFVAILLILTGILLTI). Disordered stretches follow at residues 55-79 (GEYH…NATS) and 330-350 (SSPF…PHKG). Positions 60–79 (LNTSPNENSTALQPDENATS) are enriched in polar residues. Residues 336–348 (NRRHPVTGRIRPH) show a composition bias toward basic residues. His-348 contributes to the Zn(2+) binding site.

It in the central section; belongs to the OapA family. The protein in the C-terminal section; belongs to the peptidase M23B family. The cofactor is Zn(2+).

Its subcellular location is the cell membrane. This is an uncharacterized protein from Haemophilus influenzae (strain ATCC 51907 / DSM 11121 / KW20 / Rd).